We begin with the raw amino-acid sequence, 321 residues long: Hex-5-enoyl-[acyl-carrier protein] acetylenase (321 aa).

The next 2 membrane-spanning stretches (helical) occupy residues 36–56 (FLLYNVIPTIGTITAIALLWW) and 62–82 (VEIGLLIGMWALSMIGMSVGL). Residues 83–88 (HRYFAH) carry the Histidine box-1 motif. A helical transmembrane segment spans residues 99 to 119 (VILAILGCMGAQGPVVSWVAV). A Histidine box-2 motif is present at residues 120-124 (HRRHH). Residues 188 to 208 (YVVWIVLGLLIPTILGGIIHG) traverse the membrane as a helical segment. The Histidine box-3 signature appears at 269–273 (QNNHH).

It belongs to the fatty acid desaturase type 2 family. It depends on Fe(2+) as a cofactor.

Its subcellular location is the membrane. It catalyses the reaction 5-hexenoyl-[ACP] + 2 reduced [2Fe-2S]-[ferredoxin] + O2 + 2 H(+) = 5-hexynoyl-[ACP] + 2 oxidized [2Fe-2S]-[ferredoxin] + 2 H2O. The catalysed reaction is hexanoyl-[ACP] + 2 reduced [2Fe-2S]-[ferredoxin] + O2 + 2 H(+) = 5-hexenoyl-[ACP] + 2 oxidized [2Fe-2S]-[ferredoxin] + 2 H2O. Its function is as follows. Desaturase involved in the biosynthesis of jamaicamides, which show sodium channel blocking activity and fish toxicity. Catalyzes the conversion of 5-hexenoyl loaded onto the acyl carrier protein JamC (5-hexenoyl-JamC) to 5-hexynoyl-JamC. Can also catalyze the conversion of hexanoyl-JamC to 5-hexenoyl-JamC, but it cannot use free 5-hexenoic acid, 5-hexenoyl-CoA, 2-hexenoyl-JamC, 3-hexenoyl-JamC or 4-hexenoyl-JamC. Is specific for C(6) chains, and cannot use 4-pentenoyl-JamC, 6-heptenoyl-JamC or 7-octenoyl-JamC as substrate. The polypeptide is Hex-5-enoyl-[acyl-carrier protein] acetylenase (Moorena producens (strain JHB)).